Reading from the N-terminus, the 946-residue chain is Probable leucine-rich repeat receptor-like protein kinase At5g49770 (946 aa).

The signal sequence occupies residues Met1–Ala25. Residues Phe26–Lys561 lie on the Extracellular side of the membrane. LRR repeat units lie at residues Asp67–Leu91, Ser92–Leu116, Lys118–Leu140, Glu141–Leu164, Lys166–Gly191, Leu195–Ser219, Met221–Val244, Gln245–Leu268, Thr269–Ser293, Tyr295–Pro314, Leu316–Pro340, Gln342–Lys365, Leu367–Pro387, and Asn389–Gly407. N-linked (GlcNAc...) asparagine glycans are attached at residues Asn246, Asn267, and Asn287. Asn354 and Asn362 each carry an N-linked (GlcNAc...) asparagine glycan. Asn415, Asn460, Asn489, and Asn514 each carry an N-linked (GlcNAc...) asparagine glycan. Residues Val562–Ile582 traverse the membrane as a helical segment. The Cytoplasmic segment spans residues Tyr583–Pro946. The region spanning Phe634–Leu908 is the Protein kinase domain. ATP contacts are provided by residues Val640–Val648 and Lys662. Catalysis depends on Asp758, which acts as the Proton acceptor. Residues Ser919 to Pro946 form a disordered region.

The protein belongs to the protein kinase superfamily. Ser/Thr protein kinase family.

Its subcellular location is the membrane. The catalysed reaction is L-seryl-[protein] + ATP = O-phospho-L-seryl-[protein] + ADP + H(+). The enzyme catalyses L-threonyl-[protein] + ATP = O-phospho-L-threonyl-[protein] + ADP + H(+). The sequence is that of Probable leucine-rich repeat receptor-like protein kinase At5g49770 from Arabidopsis thaliana (Mouse-ear cress).